The following is a 312-amino-acid chain: tRNA dimethylallyltransferase (312 aa).

10–17 provides a ligand contact to ATP; the sequence is GPTGVGKT. 12 to 17 lines the substrate pocket; the sequence is TGVGKT.

Belongs to the IPP transferase family. In terms of assembly, monomer. It depends on Mg(2+) as a cofactor.

It carries out the reaction adenosine(37) in tRNA + dimethylallyl diphosphate = N(6)-dimethylallyladenosine(37) in tRNA + diphosphate. In terms of biological role, catalyzes the transfer of a dimethylallyl group onto the adenine at position 37 in tRNAs that read codons beginning with uridine, leading to the formation of N6-(dimethylallyl)adenosine (i(6)A). This chain is tRNA dimethylallyltransferase, found in Coprothermobacter proteolyticus (strain ATCC 35245 / DSM 5265 / OCM 4 / BT).